The chain runs to 392 residues: p21-activated protein kinase-interacting protein 1 (392 aa).

WD repeat units lie at residues 33 to 72 (VADFTHHAHTASLSAVAVNSRFVVTGSKDETIHIYDMKKK), 73 to 113 (IEHG…AKKW), 114 to 155 (ECLK…LVEG), 156 to 195 (RSAFIKNIKQNAHIVEWSPRGEQYVVIIQNKIDIYQLDTA), 196 to 235 (SISGTITNEKRISSVKFLSESVLAVAGDEEVIRFFDCDSL), and 236 to 275 (VCLCEFKAHENRVKDMFSFEIPEHHVIVSASSDGFIKMWK). Positions 312-392 (SLPPAAEPSP…RKKKKIKTMQ (81 aa)) are disordered. A Phosphoserine modification is found at serine 320. A compositionally biased stretch (basic and acidic residues) spans 325 to 345 (EQSKIGKKEPGDTVHKEEKRS). A compositionally biased stretch (basic residues) spans 381–392 (KKRKKKKIKTMQ).

As to quaternary structure, interacts with PAK1. In terms of tissue distribution, expressed in brain, colon, heart, kidney, liver, lung, muscle, peripheral blood leukocytes, placenta, small intestine, spleen and thymus.

It is found in the nucleus. Its subcellular location is the nucleolus. Negatively regulates the PAK1 kinase. PAK1 is a member of the PAK kinase family, which has been shown to play a positive role in the regulation of signaling pathways involving MAPK8 and RELA. PAK1 exists as an inactive homodimer, which is activated by binding of small GTPases such as CDC42 to an N-terminal regulatory domain. PAK1IP1 also binds to the N-terminus of PAK1, and inhibits the specific activation of PAK1 by CDC42. May be involved in ribosomal large subunit assembly. In Homo sapiens (Human), this protein is p21-activated protein kinase-interacting protein 1 (PAK1IP1).